A 210-amino-acid polypeptide reads, in one-letter code: Hypoxanthine-guanine phosphoribosyltransferase (210 aa).

GMP is bound by residues K54, 113-121 (EDILDTALT), K145, and D173. D117 serves as the catalytic Proton acceptor. D173 serves as a coordination point for Mg(2+).

This sequence belongs to the purine/pyrimidine phosphoribosyltransferase family. It depends on Mg(2+) as a cofactor.

The protein localises to the cytoplasm. The enzyme catalyses IMP + diphosphate = hypoxanthine + 5-phospho-alpha-D-ribose 1-diphosphate. The catalysed reaction is GMP + diphosphate = guanine + 5-phospho-alpha-D-ribose 1-diphosphate. It participates in purine metabolism; IMP biosynthesis via salvage pathway; IMP from hypoxanthine: step 1/1. In terms of biological role, converts guanine to guanosine monophosphate, and hypoxanthine to inosine monophosphate. Transfers the 5-phosphoribosyl group from 5-phosphoribosylpyrophosphate onto the purine. Plays a central role in the generation of purine nucleotides through the purine salvage pathway. The polypeptide is Hypoxanthine-guanine phosphoribosyltransferase (HGPRT) (Trypanosoma brucei brucei).